The sequence spans 169 residues: Phosphopantetheine adenylyltransferase (169 aa).

Ser-10 contacts substrate. ATP contacts are provided by residues 10 to 11 and His-18; that span reads SF. The substrate site is built by Lys-42, Thr-79, and Arg-93. ATP contacts are provided by residues 94–96, Glu-104, and 129–135; these read GLR and VRPITAT.

Belongs to the bacterial CoaD family. In terms of assembly, homohexamer. It depends on Mg(2+) as a cofactor.

The protein resides in the cytoplasm. The catalysed reaction is (R)-4'-phosphopantetheine + ATP + H(+) = 3'-dephospho-CoA + diphosphate. The protein operates within cofactor biosynthesis; coenzyme A biosynthesis; CoA from (R)-pantothenate: step 4/5. Its function is as follows. Reversibly transfers an adenylyl group from ATP to 4'-phosphopantetheine, yielding dephospho-CoA (dPCoA) and pyrophosphate. This is Phosphopantetheine adenylyltransferase from Rhodopseudomonas palustris (strain TIE-1).